The following is a 220-amino-acid chain: MDGFHDLGGFQGFGKVPHTINSLSYKQVFKQDWEHLAYSLMFVGVDQLKKFSVDEVRHAVERLDVRQHVGTQYYERYIIATATLLVETGVITQAELDQALGSHFKLANPAHATGRPAITGRPPFEVGDRVVVRDEYVAGHIRMPAYVRGKEGVVLHRTSEQWPFPDAIGHGDLSAAHQPTYHVEFRVKDLWGDAADDGYVVVDLFESYLDKAPGAQAVNA.

It belongs to the nitrile hydratase subunit beta family. Heterodimer of an alpha and a beta chain.

The catalysed reaction is an aliphatic primary amide = an aliphatic nitrile + H2O. Its function is as follows. NHase catalyzes the hydration of various nitrile compounds to the corresponding amides. The polypeptide is Nitrile hydratase subunit beta (nthB) (Pseudomonas chlororaphis (Pseudomonas aureofaciens)).